The following is a 346-amino-acid chain: Heparan sulfate glucosamine 3-O-sulfotransferase 5 (346 aa).

The Cytoplasmic portion of the chain corresponds to 1–12; sequence MLFKQQAWLRQK. A helical; Signal-anchor for type II membrane protein membrane pass occupies residues 13 to 32; that stretch reads LLVLGSLAVGSLLYLVARVG. The Lumenal segment spans residues 33–346; sequence SLDRLQPICP…QITGRTLNWP (314 aa). 100–104 provides a ligand contact to 3'-phosphoadenylyl sulfate; it reads KGGTR. Residues 122 to 128 and 155 to 158 each bind substrate; these read EIHFFDN and KSPA. The 3'-phosphoadenylyl sulfate site is built by arginine 183 and serine 191. 226–227 serves as a coordination point for substrate; it reads YK. Asparagine 287 carries N-linked (GlcNAc...) asparagine glycosylation. Residue tyrosine 293 participates in 3'-phosphoadenylyl sulfate binding. Cysteine 294 and cysteine 304 are joined by a disulfide. 309-313 provides a ligand contact to 3'-phosphoadenylyl sulfate; the sequence is KGRIH.

The protein belongs to the sulfotransferase 1 family. Highly expressed in skeletal muscle and fetal brain, and also found in adult brain, spinal cord, cerebellum and colon.

The protein localises to the golgi apparatus membrane. The catalysed reaction is alpha-D-glucosaminyl-[heparan sulfate](n) + 3'-phosphoadenylyl sulfate = 3-sulfo-alpha-D-glucosaminyl-[heparan sulfate](n) + adenosine 3',5'-bisphosphate + H(+). Its function is as follows. Sulfotransferase that utilizes 3'-phospho-5'-adenylyl sulfate (PAPS) to catalyze the transfer of a sulfo group to position 3 of glucosamine residues in heparan. Catalyzes the rate limiting step in the biosynthesis of heparan sulfate (HSact). This modification is a crucial step in the biosynthesis of anticoagulant heparan sulfate as it completes the structure of the antithrombin pentasaccharide binding site. Also generates GlcUA-GlcNS or IdoUA-GlcNS and IdoUA2S-GlcNH2. The substrate-specific O-sulfation generates an enzyme-modified heparan sulfate which acts as a binding receptor to Herpes simplex virus-1 (HSV-1) and permits its entry. This chain is Heparan sulfate glucosamine 3-O-sulfotransferase 5 (HS3ST5), found in Homo sapiens (Human).